We begin with the raw amino-acid sequence, 909 residues long: Protein translocase subunit SecA (909 aa).

Residues Gln87, 105-109, and Asp507 contribute to the ATP site; that span reads GEGKT. The disordered stretch occupies residues 834–909; it reads EAVEEQRRRQ…KYKQCCGKLS (76 aa). Basic and acidic residues predominate over residues 837–848; the sequence is EEQRRRQGDMQY. The span at 859–871 shows a compositional bias: gly residues; that stretch reads QGAGGEGAAGGTA. Positions 893, 895, 904, and 905 each coordinate Zn(2+).

Belongs to the SecA family. Monomer and homodimer. Part of the essential Sec protein translocation apparatus which comprises SecA, SecYEG and auxiliary proteins SecDF-YajC and YidC. Requires Zn(2+) as cofactor.

It localises to the cell inner membrane. Its subcellular location is the cytoplasm. It catalyses the reaction ATP + H2O + cellular proteinSide 1 = ADP + phosphate + cellular proteinSide 2.. In terms of biological role, part of the Sec protein translocase complex. Interacts with the SecYEG preprotein conducting channel. Has a central role in coupling the hydrolysis of ATP to the transfer of proteins into and across the cell membrane, serving both as a receptor for the preprotein-SecB complex and as an ATP-driven molecular motor driving the stepwise translocation of polypeptide chains across the membrane. In Alkalilimnicola ehrlichii (strain ATCC BAA-1101 / DSM 17681 / MLHE-1), this protein is Protein translocase subunit SecA.